The sequence spans 781 residues: MATQADLMELDMAMEPDRKAAVSHWQQQSYLDSGIHSGATTTAPSLSGKGNPEDEDVDTNQVLYEWEQGFSQSFTQDQVADIDGQYAMTRAQRVRAAMFPETLDEGMQIPSTQFDSAHPTNVQRLAEPSQMLKHAVVNLINYQDDAELATRAIPELTKLLNDEDQVVVNKAAVMVHQLSKKEASRHAIMRSPQMVSAIVRTMQNTNDVETARCTAGTLHNLSHHREGLLAIFKSGGIPALVKMLGSPVDSVLFYAITTLHNLLLHQEGAKMAVRLAGGLQKMVALLNKTNVKFLAITTDCLQILAYGNQESKLIILASGGPQALVNIMRTYSYEKLLWTTSRVLKVLSVCSSNKPAIVEAGGMQALGLHLTDSSQRLVQNCLWTLRNLSDAATKQEGMEGLLGTLVQLLGSDDINVVTCAAGILSNLTCNNYKNKMMVCQVGGIEALVRTVLRAGDREDITEPAICALRHLTSRHQEAEMAQNAVRLHYGLPVVVKLLHPPSHWPLIKATVGLIRNLALCPANHAPLREQGAIPRLVQLLVRAHQDTQRRTSIGGTQQQFVEGVRMEEIVEGCTGALHILARDIHNRIVIRGLNTIPLFVQLLYSPIENIQRVAAGVLCDVAQDKEAAEAIEAEGATAPLTELLHSRNEGVATYAAAVLFRMSEDKPQDYKKRLSVELTSSLFRTEPMPWNEAADLGLDIGAQGEPLGYRQDDSSYRSFHAAGYGQDAMGMDSMMDHDMGGHHPGADYPVDGLPDLSHAQDLMDGLPPGDSNQLAWFDTDL.

Positions 34 to 56 (GIHSGATTTAPSLSGKGNPEDED) are disordered. ARM repeat units lie at residues 141 to 180 (NYQDDAELATRAIPELTKLLNDEDQVVVNKAAVMVHQLSK), 225 to 264 (REGLLAIFKSGGIPALVKMLGSPVDSVLFYAITTLHNLLL), 267 to 306 (EGAKMAVRLAGGLQKMVALLNKTNVKFLAITTDCLQILAY), 351 to 390 (SSNKPAIVEAGGMQALGLHLTDSSQRLVQNCLWTLRNLSD), 391 to 429 (AATKQEGMEGLLGTLVQLLGSDDINVVTCAAGILSNLTC), 432 to 473 (YKNK…HLTS), 479 to 519 (EMAQ…NLAL), 521 to 562 (PANH…QFVE), 584 to 623 (IHNRIVIRGLNTIPLFVQLLYSPIENIQRVAAGVLCDVAQ), and 625 to 664 (KEAAEAIEAEGATAPLTELLHSRNEGVATYAAAVLFRMSE). A compositionally biased stretch (basic and acidic residues) spans 735 to 745 (MDHDMGGHHPG). The tract at residues 735 to 781 (MDHDMGGHHPGADYPVDGLPDLSHAQDLMDGLPPGDSNQLAWFDTDL) is disordered.

It belongs to the beta-catenin family. In terms of assembly, interacts with EP-Cadherin/CDH3. Interacts with custos; the interaction is positively regulated by Wnt stimulation. Post-translationally, phosphorylation by gsk3b promotes ubiquitination and subsequent degradation by the proteasome. Ubiquitinated when phosphorylated by gsk3b, leading to its degradation. Expressed at intercalated disks in the heart (at protein level).

The protein resides in the cytoplasm. It is found in the nucleus. Its subcellular location is the cell membrane. Functionally, key downstream component of the canonical Wnt signaling pathway. In the absence of Wnt, forms a complex with axin1, axin2, apc, csnk1a1 and gsk3b that promotes phosphorylation on N-terminal Ser and Thr residues and ubiquitination of ctnnb1 and its subsequent degradation by the proteasome. In the presence of Wnt ligand, ctnnb1 is not ubiquitinated and accumulates in the nucleus, where it acts as a coactivator for transcription factors of the TCF/LEF family, leading to activate Wnt responsive genes. Plays a key role in dorsoventral patterning: in prospective ventral blastomeres, its down-regulation by axin1 and axin2 leads to inhibit the Wnt signaling pathway, while in prospective dorsal blastomeres, degradation of axin results in stabilization and nuclear translocation of ctnnb1. This Xenopus laevis (African clawed frog) protein is Catenin beta-1.